The following is a 281-amino-acid chain: 2-dehydro-3-deoxyphosphooctonate aldolase (281 aa).

It belongs to the KdsA family.

It is found in the cytoplasm. It catalyses the reaction D-arabinose 5-phosphate + phosphoenolpyruvate + H2O = 3-deoxy-alpha-D-manno-2-octulosonate-8-phosphate + phosphate. It participates in carbohydrate biosynthesis; 3-deoxy-D-manno-octulosonate biosynthesis; 3-deoxy-D-manno-octulosonate from D-ribulose 5-phosphate: step 2/3. It functions in the pathway bacterial outer membrane biogenesis; lipopolysaccharide biosynthesis. The sequence is that of 2-dehydro-3-deoxyphosphooctonate aldolase from Stutzerimonas stutzeri (strain A1501) (Pseudomonas stutzeri).